Consider the following 226-residue polypeptide: Endonuclease V (226 aa).

Mg(2+) contacts are provided by Asp-43 and Asp-111.

The protein belongs to the endonuclease V family. Mg(2+) is required as a cofactor.

Its subcellular location is the cytoplasm. The enzyme catalyses Endonucleolytic cleavage at apurinic or apyrimidinic sites to products with a 5'-phosphate.. In terms of biological role, DNA repair enzyme involved in the repair of deaminated bases. Selectively cleaves double-stranded DNA at the second phosphodiester bond 3' to a deoxyinosine leaving behind the intact lesion on the nicked DNA. The polypeptide is Endonuclease V (Nocardia farcinica (strain IFM 10152)).